The sequence spans 139 residues: D-ribose pyranase (139 aa).

The Proton donor role is filled by H20. Substrate-binding positions include D28, H106, and 128–130; that span reads YAN.

It belongs to the RbsD / FucU family. RbsD subfamily. In terms of assembly, homodecamer.

The protein localises to the cytoplasm. The enzyme catalyses beta-D-ribopyranose = beta-D-ribofuranose. It functions in the pathway carbohydrate metabolism; D-ribose degradation; D-ribose 5-phosphate from beta-D-ribopyranose: step 1/2. In terms of biological role, catalyzes the interconversion of beta-pyran and beta-furan forms of D-ribose. The sequence is that of D-ribose pyranase from Escherichia coli O6:H1 (strain CFT073 / ATCC 700928 / UPEC).